A 158-amino-acid chain; its full sequence is 2-C-methyl-D-erythritol 2,4-cyclodiphosphate synthase (158 aa).

Residues aspartate 9 and histidine 11 each contribute to the a divalent metal cation site. Residues 9-11 (DVH) and 35-36 (HS) contribute to the 4-CDP-2-C-methyl-D-erythritol 2-phosphate site. Histidine 43 contacts a divalent metal cation. 4-CDP-2-C-methyl-D-erythritol 2-phosphate contacts are provided by residues 57–59 (DIG), 62–66 (FPDTD), 101–107 (AQRPKMA), 133–136 (TTTE), phenylalanine 140, and arginine 143.

It belongs to the IspF family. Homotrimer. A divalent metal cation is required as a cofactor.

It catalyses the reaction 4-CDP-2-C-methyl-D-erythritol 2-phosphate = 2-C-methyl-D-erythritol 2,4-cyclic diphosphate + CMP. Its pathway is isoprenoid biosynthesis; isopentenyl diphosphate biosynthesis via DXP pathway; isopentenyl diphosphate from 1-deoxy-D-xylulose 5-phosphate: step 4/6. Functionally, involved in the biosynthesis of isopentenyl diphosphate (IPP) and dimethylallyl diphosphate (DMAPP), two major building blocks of isoprenoid compounds. Catalyzes the conversion of 4-diphosphocytidyl-2-C-methyl-D-erythritol 2-phosphate (CDP-ME2P) to 2-C-methyl-D-erythritol 2,4-cyclodiphosphate (ME-CPP) with a corresponding release of cytidine 5-monophosphate (CMP). The protein is 2-C-methyl-D-erythritol 2,4-cyclodiphosphate synthase of Lysinibacillus sphaericus (strain C3-41).